Consider the following 328-residue polypeptide: Flotillin-like protein FloA (328 aa).

The next 2 membrane-spanning stretches (helical) occupy residues 1–21 and 26–46; these read MFGL…LVLF and VGLW…TLVG.

Belongs to the flotillin-like FloA family. In terms of assembly, homooligomerizes.

It is found in the cell membrane. The protein resides in the membrane raft. Found in functional membrane microdomains (FMM) that may be equivalent to eukaryotic membrane rafts. FMMs are highly dynamic and increase in number as cells age. Flotillins are thought to be important factors in membrane fluidity. In Staphylococcus haemolyticus (strain JCSC1435), this protein is Flotillin-like protein FloA.